A 402-amino-acid polypeptide reads, in one-letter code: Mannonate dehydratase (402 aa).

The protein belongs to the mannonate dehydratase family. Requires Fe(2+) as cofactor. Mn(2+) is required as a cofactor.

It catalyses the reaction D-mannonate = 2-dehydro-3-deoxy-D-gluconate + H2O. Its pathway is carbohydrate metabolism; pentose and glucuronate interconversion. Catalyzes the dehydration of D-mannonate. This Rhizobium meliloti (strain 1021) (Ensifer meliloti) protein is Mannonate dehydratase.